The primary structure comprises 195 residues: Imidazoleglycerol-phosphate dehydratase (195 aa).

Belongs to the imidazoleglycerol-phosphate dehydratase family.

It localises to the cytoplasm. It catalyses the reaction D-erythro-1-(imidazol-4-yl)glycerol 3-phosphate = 3-(imidazol-4-yl)-2-oxopropyl phosphate + H2O. It participates in amino-acid biosynthesis; L-histidine biosynthesis; L-histidine from 5-phospho-alpha-D-ribose 1-diphosphate: step 6/9. This is Imidazoleglycerol-phosphate dehydratase from Roseobacter denitrificans (strain ATCC 33942 / OCh 114) (Erythrobacter sp. (strain OCh 114)).